The primary structure comprises 512 residues: Chitin synthase regulatory factor 2 (512 aa).

Sel1-like repeat units follow at residues 224 to 260, 261 to 296, 297 to 333, 337 to 377, 378 to 414, and 415 to 452; these read SEAL…DLNH, VQAA…SGQH, VGAM…LEAD, PQAL…KYGL, KDAQ…RKRN, and PEAM…YKNH. At C509 the chain carries Cysteine methyl ester. A lipid anchor (S-farnesyl cysteine) is attached at C509. Residues 510–512 constitute a propeptide, removed in mature form; that stretch reads IIS.

The protein localises to the membrane. In terms of biological role, involved in chitin biosynthesis. The chain is Chitin synthase regulatory factor 2 (chr2) from Schizosaccharomyces pombe (strain 972 / ATCC 24843) (Fission yeast).